The following is a 553-amino-acid chain: COP9 signalosome complex subunit 10 (553 aa).

A compositionally biased stretch (acidic residues) spans 21 to 46 (AEMEEDSDEMGVYEEETSQGAEEEVP). Residues 21–47 (AEMEEDSDEMGVYEEETSQGAEEEVPL) form a disordered region. The PCI domain occupies 298 to 474 (LRTHFSACLQ…DYVYFGDEPR (177 aa)).

As to quaternary structure, component of a COP9 signalosome-like (CSN) complex.

The protein localises to the cytoplasm. Its subcellular location is the nucleus. Component of the COP9 signalosome (CSN) complex that acts as an regulator of the ubiquitin (Ubl) conjugation pathway by mediating the deneddylation of the cullin subunit of SCF-type E3 ubiquitin-protein ligase complexes. The CSN complex is involved in the regulation of the mating pheromone response. This Eremothecium gossypii (strain ATCC 10895 / CBS 109.51 / FGSC 9923 / NRRL Y-1056) (Yeast) protein is COP9 signalosome complex subunit 10 (RRI2).